The primary structure comprises 397 residues: ATP-dependent RNA helicase eIF4A (397 aa).

Positions 23 to 51 (YKFDDLNLKPNIVRGIFGYGYETPSAIQQ) match the Q motif motif. One can recognise a Helicase ATP-binding domain in the interval 54-224 (ILPITEGRDV…TKFMNNPVRI (171 aa)). Residue 67 to 74 (AQSGTGKT) participates in ATP binding. Residues 172–175 (DEAD) carry the DEAD box motif. The Helicase C-terminal domain maps to 235 to 396 (GIKQFYINVE…EMPADIGALF (162 aa)).

Belongs to the DEAD box helicase family. eIF4A subfamily. In terms of assembly, component of the eIF4F complex, which composition varies with external and internal environmental conditions. It is composed of at least eIF4A, eIF4E and eIF4G.

It is found in the cytoplasm. It catalyses the reaction ATP + H2O = ADP + phosphate + H(+). Its function is as follows. ATP-dependent RNA helicase which is a subunit of the eIF4F complex involved in cap recognition and is required for mRNA binding to ribosome. In the current model of translation initiation, eIF4A unwinds RNA secondary structures in the 5'-UTR of mRNAs which is necessary to allow efficient binding of the small ribosomal subunit, and subsequent scanning for the initiator codon. The polypeptide is ATP-dependent RNA helicase eIF4A (TIF1) (Candida albicans (strain SC5314 / ATCC MYA-2876) (Yeast)).